Consider the following 324-residue polypeptide: HPr kinase/phosphorylase (324 aa).

Active-site residues include His146 and Lys167. Position 161–168 (161–168 (GDSGLGKS)) interacts with ATP. Ser168 lines the Mg(2+) pocket. The active-site Proton acceptor; for phosphorylation activity. Proton donor; for dephosphorylation activity is the Asp185. Residues 209–218 (LEVRGLGLLD) are important for the catalytic mechanism of both phosphorylation and dephosphorylation. Glu210 is a binding site for Mg(2+). Arg250 is an active-site residue. The tract at residues 271 to 276 (QVAAGR) is important for the catalytic mechanism of dephosphorylation.

It belongs to the HPrK/P family. Homohexamer. It depends on Mg(2+) as a cofactor.

It carries out the reaction [HPr protein]-L-serine + ATP = [HPr protein]-O-phospho-L-serine + ADP + H(+). The catalysed reaction is [HPr protein]-O-phospho-L-serine + phosphate + H(+) = [HPr protein]-L-serine + diphosphate. Functionally, catalyzes the ATP- as well as the pyrophosphate-dependent phosphorylation of a specific serine residue in HPr, a phosphocarrier protein of the phosphoenolpyruvate-dependent sugar phosphotransferase system (PTS). HprK/P also catalyzes the pyrophosphate-producing, inorganic phosphate-dependent dephosphorylation (phosphorolysis) of seryl-phosphorylated HPr (P-Ser-HPr). The polypeptide is HPr kinase/phosphorylase (Ralstonia nicotianae (strain ATCC BAA-1114 / GMI1000) (Ralstonia solanacearum)).